The primary structure comprises 400 residues: MTTLGTPLSPSATRVLLLGSGELGKEVAIELQRFGVEVIAADRYANAPAMQVAHRSHVLDMLDPAALRVLIASERPHVIVPEIEAIHTETLVALEREQGQKVIPAARAARLTMDREGIRRLAAETLGLPTSPYRFVDTAADYREAIAAVGLPCVVKPVMSSSGKGQSTLRSEADIDAAWEYAQTGGRAGAGRCIVEGFIDFDYEITLLTVRHAGGTSYCDPIGHWQQDGDYRESWQPQPMSAAALRRSQEIAKAITDDLGGWGLFGVELFVKGDEVWFSEVSPRPHDTGLVTLVSQELSEFALHARAILGLPVGAEDGGVIGQSGPSASCALLAHGNGVPVFDNVADALRDPDTALRLFGKPRVDGHRRVGVTLARADSIDAAREKARVAAAALGIQLTA.

Residues 22–23 (EL) and Glu82 contribute to the N(1)-(5-phospho-beta-D-ribosyl)glycinamide site. Residues Arg115, Lys156, 161 to 166 (SSGKGQ), 196 to 199 (EGFI), and Glu204 contribute to the ATP site. Residues 120–309 (RLAAETLGLP…EFALHARAIL (190 aa)) enclose the ATP-grasp domain. The Mg(2+) site is built by Glu268 and Glu280. Residues Asp287, Lys361, and 368 to 369 (RR) contribute to the N(1)-(5-phospho-beta-D-ribosyl)glycinamide site.

The protein belongs to the PurK/PurT family. As to quaternary structure, homodimer.

The enzyme catalyses N(1)-(5-phospho-beta-D-ribosyl)glycinamide + formate + ATP = N(2)-formyl-N(1)-(5-phospho-beta-D-ribosyl)glycinamide + ADP + phosphate + H(+). The protein operates within purine metabolism; IMP biosynthesis via de novo pathway; N(2)-formyl-N(1)-(5-phospho-D-ribosyl)glycinamide from N(1)-(5-phospho-D-ribosyl)glycinamide (formate route): step 1/1. Functionally, involved in the de novo purine biosynthesis. Catalyzes the transfer of formate to 5-phospho-ribosyl-glycinamide (GAR), producing 5-phospho-ribosyl-N-formylglycinamide (FGAR). Formate is provided by PurU via hydrolysis of 10-formyl-tetrahydrofolate. This Xanthomonas oryzae pv. oryzae (strain PXO99A) protein is Formate-dependent phosphoribosylglycinamide formyltransferase.